The chain runs to 281 residues: ATP synthase gamma chain (281 aa).

Belongs to the ATPase gamma chain family. In terms of assembly, F-type ATPases have 2 components, CF(1) - the catalytic core - and CF(0) - the membrane proton channel. CF(1) has five subunits: alpha(3), beta(3), gamma(1), delta(1), epsilon(1). CF(0) has three main subunits: a, b and c.

It localises to the cell membrane. In terms of biological role, produces ATP from ADP in the presence of a proton gradient across the membrane. The gamma chain is believed to be important in regulating ATPase activity and the flow of protons through the CF(0) complex. This chain is ATP synthase gamma chain, found in Desulfitobacterium hafniense (strain DSM 10664 / DCB-2).